Here is a 294-residue protein sequence, read N- to C-terminus: Cyclin-G1 (294 aa).

Belongs to the cyclin family. Cyclin G subfamily.

It is found in the nucleus. Functionally, may play a role in growth regulation. Is associated with G2/M phase arrest in response to DNA damage. May be an intermediate by which p53 mediates its role as an inhibitor of cellular proliferation. In Rattus norvegicus (Rat), this protein is Cyclin-G1 (Ccng1).